The primary structure comprises 787 residues: Endonuclease MutS2 (787 aa).

Residue 329–336 participates in ATP binding; the sequence is GPNTGGKT. The Smr domain occupies 712 to 787; that stretch reads INLLGCTVDE…DAGVTIVDFK (76 aa).

It belongs to the DNA mismatch repair MutS family. MutS2 subfamily. In terms of assembly, homodimer. Binds to stalled ribosomes, contacting rRNA.

Its function is as follows. Endonuclease that is involved in the suppression of homologous recombination and thus may have a key role in the control of bacterial genetic diversity. In terms of biological role, acts as a ribosome collision sensor, splitting the ribosome into its 2 subunits. Detects stalled/collided 70S ribosomes which it binds and splits by an ATP-hydrolysis driven conformational change. Acts upstream of the ribosome quality control system (RQC), a ribosome-associated complex that mediates the extraction of incompletely synthesized nascent chains from stalled ribosomes and their subsequent degradation. Probably generates substrates for RQC. The protein is Endonuclease MutS2 of Lachnospira eligens (strain ATCC 27750 / DSM 3376 / VPI C15-48 / C15-B4) (Eubacterium eligens).